The sequence spans 591 residues: Transcription factor COE1-A (591 aa).

Positions 63-66 (RKSN) are interaction with DNA. The C5-type zinc-finger motif lies at 151-170 (CRVLLTHEIMCSRCCDKKSC). 2 interaction with DNA regions span residues 197 to 204 (NCLKNAGN) and 236 to 239 (NNSK). The IPT/TIG domain occupies 262 to 344 (PCIKAISPSE…CKGTPGRFIY (83 aa)). A compositionally biased stretch (polar residues) spans 454–466 (ANQGFSRNTSSVS). Residues 454–484 (ANQGFSRNTSSVSPHGYVPSTTPQQSSYSTV) are disordered. Residues 471-484 (VPSTTPQQSSYSTV) are compositionally biased toward low complexity.

This sequence belongs to the COE family. Forms either a homodimer or a heterodimer with a related family member. As to expression, detected in B cells.

It localises to the nucleus. In terms of biological role, transcriptional activator. This Danio rerio (Zebrafish) protein is Transcription factor COE1-A.